We begin with the raw amino-acid sequence, 689 residues long: Methionine--tRNA ligase (689 aa).

A 'HIGH' region motif is present at residues 15–25; that stretch reads PYANGPIHLGH. 4 residues coordinate Zn(2+): Cys146, Cys149, Cys159, and Cys162. A 'KMSKS' region motif is present at residues 332–336; it reads KMSKS. Lys335 is a binding site for ATP. Positions 588 to 689 constitute a tRNA-binding domain; it reads DFAKIDLRIA…EGAQPGMRVK (102 aa).

This sequence belongs to the class-I aminoacyl-tRNA synthetase family. MetG type 1 subfamily. In terms of assembly, homodimer. Zn(2+) is required as a cofactor.

The protein localises to the cytoplasm. The enzyme catalyses tRNA(Met) + L-methionine + ATP = L-methionyl-tRNA(Met) + AMP + diphosphate. Its function is as follows. Is required not only for elongation of protein synthesis but also for the initiation of all mRNA translation through initiator tRNA(fMet) aminoacylation. The polypeptide is Methionine--tRNA ligase (Shewanella sp. (strain W3-18-1)).